Reading from the N-terminus, the 442-residue chain is Prenyltransferase nscD (442 aa).

Belongs to the tryptophan dimethylallyltransferase family.

It participates in secondary metabolite biosynthesis. Prenyltransferase; part of the gene cluster that mediates the biosynthesis of neosartoricin B, a prenylated anthracenone that probably exhibits T-cell antiproliferative activity, suggestive of a physiological role as an immunosuppressive agent. The non-reducing polyketide synthase nscA probably synthesizes and cyclizes the decaketide backbone. The hydrolase nscB then mediates the product release through hydrolysis followed by spontaneous decarboxylation. The prenyltransferase nscD catalyzes the addition of the dimethylallyl group to the aromatic C5. The FAD-dependent monooxygenase nscC is then responsible for the stereospecific hydroxylation at C2. Neosartoricin B can be converted into two additional compounds neosartoricins C and D. Neosartoricin C is a spirocyclic compound that is cyclized through the attack of C3 hydroxyl on C14, followed by dehydration. On the other hand, neosartoricin D is a further cyclized compound in which attack of C2 on C14 in neosartoricin C results in the formation of the acetal-containing dioxabicyclo-octanone ring. Both of these compounds are novel and possibly represent related metabolites of the gene cluster. In Trichophyton verrucosum (strain HKI 0517), this protein is Prenyltransferase nscD.